The sequence spans 179 residues: Large ribosomal subunit protein uL5c (179 aa).

Belongs to the universal ribosomal protein uL5 family. As to quaternary structure, part of the 50S ribosomal subunit; contacts the 5S rRNA.

It is found in the plastid. In terms of biological role, binds 5S rRNA, forms part of the central protuberance of the 50S subunit. This is Large ribosomal subunit protein uL5c (rpl5) from Euglena longa (Euglenophycean alga).